A 153-amino-acid polypeptide reads, in one-letter code: Ribosomal RNA large subunit methyltransferase H (153 aa).

S-adenosyl-L-methionine-binding residues include Leu71 and Gly102.

The protein belongs to the RNA methyltransferase RlmH family. In terms of assembly, homodimer.

Its subcellular location is the cytoplasm. The catalysed reaction is pseudouridine(1915) in 23S rRNA + S-adenosyl-L-methionine = N(3)-methylpseudouridine(1915) in 23S rRNA + S-adenosyl-L-homocysteine + H(+). Specifically methylates the pseudouridine at position 1915 (m3Psi1915) in 23S rRNA. This is Ribosomal RNA large subunit methyltransferase H from Anaeromyxobacter sp. (strain K).